A 392-amino-acid chain; its full sequence is Phosphoglycerate kinase (392 aa).

Substrate-binding positions include 19–21 (DFN), R35, 58–61 (HMGR), R117, and R150. ATP-binding positions include K201, E323, and 349 to 352 (GGDS).

The protein belongs to the phosphoglycerate kinase family. In terms of assembly, monomer.

Its subcellular location is the cytoplasm. The catalysed reaction is (2R)-3-phosphoglycerate + ATP = (2R)-3-phospho-glyceroyl phosphate + ADP. It functions in the pathway carbohydrate degradation; glycolysis; pyruvate from D-glyceraldehyde 3-phosphate: step 2/5. The chain is Phosphoglycerate kinase from Desulfotalea psychrophila (strain LSv54 / DSM 12343).